The following is a 392-amino-acid chain: Putative purine permease 19 (392 aa).

The segment covering 1 to 16 (MGFHTKSPDRVTHEEE) has biased composition (basic and acidic residues). The tract at residues 1–29 (MGFHTKSPDRVTHEEEANIGVDNQPRETT) is disordered. The residue at position 30 (S30) is a Phosphoserine. The next 10 membrane-spanning stretches (helical) occupy residues 46–66 (ICIF…TLLL), 88–108 (WLQS…LLLW), 128–148 (LFLL…LYAI), 154–174 (VFFL…TTII), 182–202 (WIIL…TSSG), 220–240 (WCAF…QLGF), 254–274 (VILM…VGLF), 300–320 (LIGL…LVCL), 325–345 (FSNV…VLAF), and 354–374 (FFKE…VYSL).

The protein belongs to the purine permeases (TC 2.A.7.14) family.

It localises to the membrane. The sequence is that of Putative purine permease 19 (PUP19) from Arabidopsis thaliana (Mouse-ear cress).